Reading from the N-terminus, the 71-residue chain is U-scoloptoxin(21)-Sm1a (71 aa).

An N-terminal signal peptide occupies residues 1-21 (MKSVIFALFLVYLLIVRAAEA). Residues 45-71 (IELANDPNGPGRRRRAPAENEDFLKHS) are disordered. Residues 60–71 (APAENEDFLKHS) are compositionally biased toward basic and acidic residues.

The protein belongs to the scoloptoxin-21 family. As to expression, expressed by the venom gland.

It is found in the secreted. The protein is U-scoloptoxin(21)-Sm1a of Scolopendra morsitans (Tanzanian blue ringleg centipede).